A 253-amino-acid polypeptide reads, in one-letter code: 5-oxoprolinase subunit A (253 aa).

This sequence belongs to the LamB/PxpA family. As to quaternary structure, forms a complex composed of PxpA, PxpB and PxpC.

The enzyme catalyses 5-oxo-L-proline + ATP + 2 H2O = L-glutamate + ADP + phosphate + H(+). Its function is as follows. Catalyzes the cleavage of 5-oxoproline to form L-glutamate coupled to the hydrolysis of ATP to ADP and inorganic phosphate. The chain is 5-oxoprolinase subunit A from Bacillus cereus (strain AH187).